We begin with the raw amino-acid sequence, 155 residues long: uncharacterized protein (155 aa).

Disordered stretches follow at residues Met1 to Phe22 and Pro108 to Ala155. Ser2 carries the post-translational modification N-acetylserine. A phosphoserine mark is found at Ser136, Ser144, and Ser146. A compositionally biased stretch (acidic residues) spans Ser136–Ala155.

This is an uncharacterized protein from Rattus norvegicus (Rat).